The following is a 251-amino-acid chain: Tyrosine phosphatase-like protein J3 (251 aa).

In terms of domain architecture, Tyrosine-protein phosphatase spans Ile26–Glu251.

The protein belongs to the protein-tyrosine phosphatase family.

The sequence is that of Tyrosine phosphatase-like protein J3 (J4) from Microplitis demolitor (Parasitoid wasp).